A 381-amino-acid polypeptide reads, in one-letter code: L-lactate dehydrogenase A-like 6B (381 aa).

NAD(+)-binding positions include 101-106 and Arg148; that span reads DVDEGR. The substrate site is built by Arg155, Asn187, and Arg218. Residue Asn187 coordinates NAD(+). The active-site Proton acceptor is His242. Thr297 lines the substrate pocket.

This sequence belongs to the LDH/MDH superfamily. LDH family.

It carries out the reaction (S)-lactate + NAD(+) = pyruvate + NADH + H(+). The protein operates within fermentation; pyruvate fermentation to lactate; (S)-lactate from pyruvate: step 1/1. This Bos taurus (Bovine) protein is L-lactate dehydrogenase A-like 6B (LDHAL6B).